Here is a 324-residue protein sequence, read N- to C-terminus: Ribosomal RNA small subunit methyltransferase H (324 aa).

Residues 47-49 (GGH), Asp-67, Leu-96, Asp-115, and Gln-122 contribute to the S-adenosyl-L-methionine site.

It belongs to the methyltransferase superfamily. RsmH family.

It is found in the cytoplasm. It carries out the reaction cytidine(1402) in 16S rRNA + S-adenosyl-L-methionine = N(4)-methylcytidine(1402) in 16S rRNA + S-adenosyl-L-homocysteine + H(+). Its function is as follows. Specifically methylates the N4 position of cytidine in position 1402 (C1402) of 16S rRNA. The polypeptide is Ribosomal RNA small subunit methyltransferase H (Halorhodospira halophila (strain DSM 244 / SL1) (Ectothiorhodospira halophila (strain DSM 244 / SL1))).